We begin with the raw amino-acid sequence, 813 residues long: Leucine--tRNA ligase (813 aa).

The 'HIGH' region motif lies at 39–49; it reads PYPSGRIHMGH. A 'KMSKS' region motif is present at residues 582 to 586; the sequence is KMSKS. Residue lysine 585 coordinates ATP.

This sequence belongs to the class-I aminoacyl-tRNA synthetase family.

Its subcellular location is the cytoplasm. It carries out the reaction tRNA(Leu) + L-leucine + ATP = L-leucyl-tRNA(Leu) + AMP + diphosphate. The polypeptide is Leucine--tRNA ligase (Campylobacter hominis (strain ATCC BAA-381 / DSM 21671 / CCUG 45161 / LMG 19568 / NCTC 13146 / CH001A)).